Here is a 478-residue protein sequence, read N- to C-terminus: UDP-N-acetylmuramate--L-alanine ligase (478 aa).

112–118 (GTHGKTT) is a binding site for ATP.

The protein belongs to the MurCDEF family.

It localises to the cytoplasm. It carries out the reaction UDP-N-acetyl-alpha-D-muramate + L-alanine + ATP = UDP-N-acetyl-alpha-D-muramoyl-L-alanine + ADP + phosphate + H(+). It functions in the pathway cell wall biogenesis; peptidoglycan biosynthesis. Cell wall formation. This chain is UDP-N-acetylmuramate--L-alanine ligase, found in Polynucleobacter asymbioticus (strain DSM 18221 / CIP 109841 / QLW-P1DMWA-1) (Polynucleobacter necessarius subsp. asymbioticus).